Here is a 401-residue protein sequence, read N- to C-terminus: Imidazolonepropionase (401 aa).

H70 and H72 together coordinate Fe(3+). 2 residues coordinate Zn(2+): H70 and H72. 4-imidazolone-5-propanoate contacts are provided by R79, Y142, and H175. Y142 contacts N-formimidoyl-L-glutamate. Position 238 (H238) interacts with Fe(3+). H238 serves as a coordination point for Zn(2+). Q241 lines the 4-imidazolone-5-propanoate pocket. D313 is a binding site for Fe(3+). Residue D313 participates in Zn(2+) binding. Positions 315 and 317 each coordinate N-formimidoyl-L-glutamate. 4-imidazolone-5-propanoate is bound at residue T318.

Belongs to the metallo-dependent hydrolases superfamily. HutI family. Requires Zn(2+) as cofactor. Fe(3+) serves as cofactor.

The protein resides in the cytoplasm. The enzyme catalyses 4-imidazolone-5-propanoate + H2O = N-formimidoyl-L-glutamate. It participates in amino-acid degradation; L-histidine degradation into L-glutamate; N-formimidoyl-L-glutamate from L-histidine: step 3/3. Its function is as follows. Catalyzes the hydrolytic cleavage of the carbon-nitrogen bond in imidazolone-5-propanoate to yield N-formimidoyl-L-glutamate. It is the third step in the universal histidine degradation pathway. The chain is Imidazolonepropionase from Xanthomonas campestris pv. campestris (strain 8004).